Consider the following 591-residue polypeptide: DDB1- and CUL4-associated factor 8 (591 aa).

Polar residues predominate over residues 1-25 (MSNKRPNTTDGRTDLANGSLSSSPE). Positions 1–140 (MSNKRPNTTD…EDWVSSETTA (140 aa)) are disordered. A phosphoserine mark is found at Ser-22 and Ser-23. The short motif at 40 to 51 (IEVEASDLSLSL) is the Nuclear export signal element. Basic and acidic residues-rich tracts occupy residues 66–100 (RGTD…HGHS) and 118–131 (SRDQ…RALE). Residues Ser-100, Ser-123, and Ser-124 each carry the phosphoserine modification. WD repeat units lie at residues 185-224 (GHTG…PVLD), 228-269 (GHKS…CCKN), 275-315 (QHKG…PASK), 323-363 (EKKV…ENEN), 379-418 (ESKA…GAQY), 426-466 (RNNA…IIQF), and 470-509 (DKGG…STEL). Arg-198 carries the post-translational modification Omega-N-methylarginine; by PRMT1. A disordered region spans residues 552–591 (HRRWREPGVGATDADSDESPSSSDTSDEEEGPDRVQCMPS).

It belongs to the WD repeat DCAF8 family. As to quaternary structure, interacts with DDB1, CUL4A and CUL4B. Interacts with KPNA1, KPNB1 and XPO1. As to expression, expressed in the brain.

Its subcellular location is the nucleus. The protein localises to the cytoplasm. Its pathway is protein modification; protein ubiquitination. Its function is as follows. May function as a substrate receptor for CUL4-DDB1 E3 ubiquitin-protein ligase complex. The polypeptide is DDB1- and CUL4-associated factor 8 (Dcaf8) (Mus musculus (Mouse)).